Reading from the N-terminus, the 140-residue chain is Active regulator of SIRT1 (140 aa).

2 disordered regions span residues 1–52 (MSAS…KNKA) and 95–123 (QQVLTQNRGRKSKDRPAEKKEKKKPEGTV). Over residues 108-120 (DRPAEKKEKKKPE) the composition is skewed to basic and acidic residues.

Belongs to the AROS family. As to quaternary structure, part of the small subunit (SSU) processome, composed of more than 70 proteins and the RNA chaperone small nucleolar RNA (snoRNA) U3.

The protein localises to the nucleus. It localises to the nucleolus. Its function is as follows. Part of the small subunit (SSU) processome, first precursor of the small eukaryotic ribosomal subunit. During the assembly of the SSU processome in the nucleolus, many ribosome biogenesis factors, an RNA chaperone and ribosomal proteins associate with the nascent pre-rRNA and work in concert to generate RNA folding, modifications, rearrangements and cleavage as well as targeted degradation of pre-ribosomal RNA by the RNA exosome. Acts as a chaperone that specifically mediates the integration of RPS19 in state post-A1. Direct regulator of SIRT1. The sequence is that of Active regulator of SIRT1 (RPS19BP1) from Gallus gallus (Chicken).